A 189-amino-acid chain; its full sequence is Large ribosomal subunit protein bL9 (189 aa).

This sequence belongs to the bacterial ribosomal protein bL9 family.

Functionally, binds to the 23S rRNA. The protein is Large ribosomal subunit protein bL9 of Brucella ovis (strain ATCC 25840 / 63/290 / NCTC 10512).